The primary structure comprises 467 residues: UDP-N-acetylmuramoylalanine--D-glutamate ligase (467 aa).

Residue 115 to 121 participates in ATP binding; the sequence is GTDGKTT.

It belongs to the MurCDEF family.

Its subcellular location is the cytoplasm. The enzyme catalyses UDP-N-acetyl-alpha-D-muramoyl-L-alanine + D-glutamate + ATP = UDP-N-acetyl-alpha-D-muramoyl-L-alanyl-D-glutamate + ADP + phosphate + H(+). The protein operates within cell wall biogenesis; peptidoglycan biosynthesis. Cell wall formation. Catalyzes the addition of glutamate to the nucleotide precursor UDP-N-acetylmuramoyl-L-alanine (UMA). In Chlorobaculum parvum (strain DSM 263 / NCIMB 8327) (Chlorobium vibrioforme subsp. thiosulfatophilum), this protein is UDP-N-acetylmuramoylalanine--D-glutamate ligase.